The following is a 903-amino-acid chain: Chitin synthase 1 (903 aa).

Residues 1 to 154 are disordered; sequence MDPRYGAQPQ…YQDQPQQGGG (154 aa). Over residues 67–79 the composition is skewed to polar residues; that stretch reads DHLNLNAAQSVDN. An N-linked (GlcNAc...) asparagine glycan is attached at N79. A compositionally biased stretch (low complexity) spans 100–117; that stretch reads YYNQPYEPRPQQQPYDQG. A compositionally biased stretch (polar residues) spans 135–150; the sequence is HQPSDAPSEPYQDQPQ. 9 helical membrane-spanning segments follow: residues 444-464, 543-563, 573-593, 619-639, 654-674, 700-720, 729-749, 828-848, and 875-895; these read SAFG…YVAL, RWLN…LDFL, FAFF…WFAI, ILGV…FVLS, MCWF…FIAV, MLII…LIML, LVQY…YAFC, GVVL…LSSA, and IVLW…MWFL.

Belongs to the chitin synthase family. Class I subfamily.

Its subcellular location is the cell membrane. The catalysed reaction is [(1-&gt;4)-N-acetyl-beta-D-glucosaminyl](n) + UDP-N-acetyl-alpha-D-glucosamine = [(1-&gt;4)-N-acetyl-beta-D-glucosaminyl](n+1) + UDP + H(+). Its function is as follows. Polymerizes chitin, a structural polymer of the cell wall and septum, by transferring the sugar moiety of UDP-GlcNAc to the non-reducing end of the growing chitin polymer. Plays an important role in nuclear sorting or distribution. The protein is Chitin synthase 1 of Fusarium oxysporum f. sp. lycopersici (strain 4287 / CBS 123668 / FGSC 9935 / NRRL 34936) (Fusarium vascular wilt of tomato).